Here is a 37-residue protein sequence, read N- to C-terminus: Large ribosomal subunit protein bL36c (37 aa).

This sequence belongs to the bacterial ribosomal protein bL36 family.

It is found in the plastid. This chain is Large ribosomal subunit protein bL36c, found in Cuscuta exaltata (Tall dodder).